Consider the following 509-residue polypeptide: ATP synthase subunit alpha (509 aa).

169 to 176 (GDRQTGKT) is an ATP binding site.

This sequence belongs to the ATPase alpha/beta chains family. In terms of assembly, F-type ATPases have 2 components, CF(1) - the catalytic core - and CF(0) - the membrane proton channel. CF(1) has five subunits: alpha(3), beta(3), gamma(1), delta(1), epsilon(1). CF(0) has three main subunits: a(1), b(2) and c(9-12). The alpha and beta chains form an alternating ring which encloses part of the gamma chain. CF(1) is attached to CF(0) by a central stalk formed by the gamma and epsilon chains, while a peripheral stalk is formed by the delta and b chains.

The protein localises to the cell inner membrane. It catalyses the reaction ATP + H2O + 4 H(+)(in) = ADP + phosphate + 5 H(+)(out). Functionally, produces ATP from ADP in the presence of a proton gradient across the membrane. The alpha chain is a regulatory subunit. The chain is ATP synthase subunit alpha from Sinorhizobium medicae (strain WSM419) (Ensifer medicae).